We begin with the raw amino-acid sequence, 221 residues long: Oxaloacetate tautomerase FAHD1, mitochondrial (221 aa).

The N-terminal 24 residues, 1 to 24 (MAASRPLSRFWEWGKNIVCVGRNY), are a transit peptide targeting the mitochondrion. The residue at position 37 (Ser37) is a Phosphoserine. Glu68, Glu70, and Asp99 together coordinate Mg(2+). Lys110 is modified (N6-acetyllysine). Lys112 is subject to N6-succinyllysine.

The protein belongs to the FAH family. In terms of assembly, homodimer. Mg(2+) is required as a cofactor. The cofactor is Mn(2+).

It is found in the mitochondrion. Its subcellular location is the cytoplasm. The protein localises to the cytosol. It catalyses the reaction oxaloacetate = enol-oxaloacetate. It carries out the reaction oxaloacetate + H(+) = pyruvate + CO2. The enzyme catalyses a 3-acylpyruvate + H2O = a carboxylate + pyruvate + H(+). The catalysed reaction is acetylpyruvate + H2O = acetate + pyruvate + H(+). It catalyses the reaction 3-fumarylpyruvate + H2O = fumarate + pyruvate + H(+). Its activity is regulated as follows. Oxaloacetate decarboxylation is competitively inhibited by oxalate. Functionally, tautomerase that converts enol-oxaloacetate, a strong inhibitor of succinate dehydrogenase, to the physiological keto form of oxaloacetate. It is thereby required to maximize aerobic respiration efficiency by preventing succinate dehydrogenase inhibition. Also acts as a weak oxaloacetate decarboxylase (ODx), catalyzing the decarboxylation of oxaloacetate (OAA) to pyruvate and CO(2), and as such is likely a regulatory enzyme in the TCA cycle. Also displays acylpyruvase activity, being able to hydrolyze acetylpyruvate and fumarylpyruvate in vitro. The protein is Oxaloacetate tautomerase FAHD1, mitochondrial of Bos taurus (Bovine).